A 645-amino-acid polypeptide reads, in one-letter code: Glucans biosynthesis glucosyltransferase H (645 aa).

Residues 1–28 (MDGTVTLSPAPTDLPPVSSLDAGQPTLP) are disordered. A run of 7 helical transmembrane segments spans residues 64 to 84 (LIGG…SVLW), 98 to 118 (LFVL…AGFI), 423 to 443 (APMW…GAGI), 465 to 485 (AIWI…LGYI), 504 to 524 (ALSI…VMYL), 558 to 578 (SYGG…LVSP), and 580 to 600 (LAAW…VVAV).

It belongs to the glycosyltransferase 2 family. OpgH subfamily.

Its subcellular location is the cell inner membrane. The protein operates within glycan metabolism; osmoregulated periplasmic glucan (OPG) biosynthesis. In terms of biological role, involved in the biosynthesis of osmoregulated periplasmic glucans (OPGs). The protein is Glucans biosynthesis glucosyltransferase H of Xanthomonas campestris pv. campestris (strain B100).